Consider the following 1500-residue polypeptide: Carbamoyl-phosphate synthase [ammonia], mitochondrial (1500 aa).

Residues 1-38 (MTRILTACKVVKTLKSGFGLANVTSKRQWDFSRPGIRL) constitute a mitochondrion transit peptide. The tract at residues 39–218 (LSVKAQTAHI…VKVFGKGNPT (180 aa)) is anthranilate phosphoribosyltransferase homolog. An N6-acetyllysine; alternate mark is found at Lys55, Lys57, and Lys119. Lys55 is subject to N6-glutaryllysine; alternate. N6-succinyllysine; alternate occurs at positions 55, 57, and 119. Phosphoserine is present on Ser148. N6-acetyllysine; alternate occurs at positions 157 and 171. Residue Lys157 is modified to N6-succinyllysine; alternate. N6-glutaryllysine; alternate is present on Lys171. An N6-glutaryllysine modification is found at Lys176. Residue Lys182 is modified to N6-acetyllysine. Ser189 carries the post-translational modification Phosphoserine. Lys197 bears the N6-acetyllysine mark. N6-acetyllysine; alternate occurs at positions 207, 210, 214, 219, and 228. N6-glutaryllysine; alternate is present on residues Lys207, Lys210, Lys214, Lys219, and Lys228. At Lys207 the chain carries N6-succinyllysine; alternate. Lys214 carries the post-translational modification N6-succinyllysine; alternate. Positions 219–404 (KVVAVDCGIK…FSLIKKGKGT (186 aa)) constitute a Glutamine amidotransferase type-1 domain. An N6-glutaryllysine modification is found at Lys237. Lys279 is subject to N6-acetyllysine. 4 positions are modified to N6-acetyllysine; alternate: Lys280, Lys287, Lys307, and Lys310. An N6-glutaryllysine; alternate modification is found at Lys280. Lys287 and Lys307 each carry N6-succinyllysine; alternate. 2 positions are modified to N6-glutaryllysine; alternate: Lys307 and Lys310. Lys400 bears the N6-succinyllysine mark. N6-glutaryllysine; alternate is present on residues Lys402, Lys412, Lys453, and Lys458. N6-succinyllysine; alternate occurs at positions 402 and 412. An N6-acetyllysine; alternate mark is found at Lys412, Lys453, Lys458, Lys522, Lys527, and Lys532. 3 positions are modified to N6-succinyllysine; alternate: Lys458, Lys522, and Lys527. N6-glutaryllysine; alternate occurs at positions 527 and 532. Ser537 carries the phosphoserine; alternate modification. Ser537 carries an O-linked (GlcNAc) serine; alternate glycan. The residue at position 540 (Ser540) is a Phosphoserine. In terms of domain architecture, ATP-grasp 1 spans 551–743 (SDKLNEINEK…LAFIAAKIAL (193 aa)). Residues Lys553 and Lys560 each carry the N6-acetyllysine; alternate modification. At Lys553 the chain carries N6-glutaryllysine; alternate. 2 positions are modified to N6-succinyllysine; alternate: Lys553 and Lys560. Phosphoserine is present on Ser569. 3 positions are modified to N6-acetyllysine; alternate: Lys575, Lys603, and Lys612. An N6-succinyllysine; alternate mark is found at Lys575, Lys603, and Lys612. Lys630 carries the N6-acetyllysine modification. Lys728 carries the post-translational modification N6-glutaryllysine. N6-acetyllysine; alternate occurs at positions 751, 757, 772, 793, 811, 831, 841, and 856. N6-succinyllysine; alternate occurs at positions 751 and 757. N6-glutaryllysine; alternate occurs at positions 757, 772, 793, and 811. The residue at position 793 (Lys793) is an N6-succinyllysine; alternate. Lys831 carries the post-translational modification N6-succinyllysine; alternate. Residues Lys841 and Lys856 each carry the N6-glutaryllysine; alternate modification. Lys869 carries the N6-glutaryllysine modification. Residues Lys875, Lys889, and Lys892 each carry the N6-acetyllysine; alternate modification. N6-glutaryllysine; alternate is present on residues Lys875, Lys889, and Lys892. Residues Lys875, Lys889, and Lys892 each carry the N6-succinyllysine; alternate modification. A phosphoserine mark is found at Ser896 and Ser898. Lys908, Lys915, and Lys919 each carry N6-acetyllysine; alternate. N6-glutaryllysine; alternate is present on residues Lys908, Lys915, and Lys919. An N6-succinyllysine; alternate mark is found at Lys915 and Lys919. At Lys935 the chain carries N6-acetyllysine. Position 1036 is a phosphoserine (Ser1036). N6-acetyllysine; alternate is present on Lys1074. At Lys1074 the chain carries N6-glutaryllysine; alternate. Lys1074 bears the N6-succinyllysine; alternate mark. Residues Ser1079, Ser1090, and Ser1093 each carry the phosphoserine modification. Positions 1093-1284 (SAVLDELKVA…FIDVATKVMI (192 aa)) constitute an ATP-grasp 2 domain. At Lys1100 the chain carries N6-acetyllysine; alternate. The residue at position 1100 (Lys1100) is an N6-succinyllysine; alternate. The residue at position 1149 (Lys1149) is an N6-succinyllysine. Lys1168 and Lys1183 each carry N6-acetyllysine; alternate. Residues Lys1168 and Lys1183 each carry the N6-glutaryllysine; alternate modification. An N6-succinyllysine; alternate mark is found at Lys1168 and Lys1183. At Ser1203 the chain carries Phosphoserine. Position 1222 is an N6-acetyllysine (Lys1222). An N6-glutaryllysine modification is found at Lys1224. Lys1232, Lys1269, and Lys1291 each carry N6-acetyllysine; alternate. An N6-succinyllysine; alternate mark is found at Lys1232, Lys1269, and Lys1291. An O-linked (GlcNAc) serine glycan is attached at Ser1331. Thr1332 is a glycosylation site (O-linked (GlcNAc) threonine). The 146-residue stretch at 1355–1500 (FKIPQKGILI…YRQYSAGKAA (146 aa)) folds into the MGS-like domain. Lys1356 carries the N6-acetyllysine; alternate modification. N6-glutaryllysine; alternate is present on residues Lys1356 and Lys1360. Lys1356 and Lys1360 each carry N6-succinyllysine; alternate. Thr1391, Thr1394, and Trp1410 together coordinate N-acetyl-L-glutamate. Phosphoserine is present on residues Ser1419 and Ser1431. N-acetyl-L-glutamate is bound by residues Asn1437 and Asn1440. Lys1444 carries the N6-acetyllysine; alternate modification. Residue Lys1444 is modified to N6-succinyllysine; alternate. Asn1449 contacts N-acetyl-L-glutamate. N6-acetyllysine; alternate is present on residues Lys1471, Lys1479, and Lys1486. Residues Lys1471, Lys1479, and Lys1486 each carry the N6-succinyllysine; alternate modification. N6-glutaryllysine; alternate is present on residues Lys1479 and Lys1486.

As to quaternary structure, can form homooligomers (monomers as predominant form and dimers). In terms of processing, 50% of the mature protein that was isolated had Leu-39 as its N-terminal residue and 50% had Ser-40 suggesting two adjacent processing sites. However, the possibility of proteolytic removal of Leu-39 during the isolation of the enzyme cannot be excluded. Undergoes proteolytic cleavage in the C-terminal region corresponding to the loss of approximately 12 AA residues from the C-terminus. Post-translationally, succinylated at Lys-287 and Lys-1291. Desuccinylated at Lys-1291 by SIRT5, leading to activation. Glutarylated. Glutarylation levels increase during fasting. Deglutarylated by SIRT5 at Lys-55, Lys-219, Lys-412, Lys-889, Lys-892, Lys-915, Lys-1360 and Lys-1486, leading to activation. Primarily in the liver and small intestine.

The protein localises to the mitochondrion. It localises to the nucleus. The protein resides in the nucleolus. Its subcellular location is the cell membrane. The catalysed reaction is hydrogencarbonate + NH4(+) + 2 ATP = carbamoyl phosphate + 2 ADP + phosphate + 2 H(+). Its activity is regulated as follows. Requires N-acetyl-L-glutamate (NAG) as an allosteric activator. N-acetyl-L-beta-phenylglutamate (Phe-NAG) can also activate CPSase I, but with an activation constant that is 2-fold higher than that for NAG. In terms of biological role, involved in the urea cycle of ureotelic animals where the enzyme plays an important role in removing excess ammonia from the cell. The polypeptide is Carbamoyl-phosphate synthase [ammonia], mitochondrial (Cps1) (Rattus norvegicus (Rat)).